A 602-amino-acid polypeptide reads, in one-letter code: Beta-(1--&gt;2)glucan export ATP-binding/permease protein NdvA (602 aa).

Residues 21–306 (GWLLAFANLL…VVSFINNVFM (286 aa)) form the ABC transmembrane type-1 domain. A run of 6 helical transmembrane segments spans residues 22–42 (WLLA…PVLF), 63–83 (FLAA…LVAL), 141–161 (EHFA…YLNW), 163–183 (LAIL…FVVR), 240–262 (VLSW…VLAI), and 280–300 (IVMF…VVSF). The region spanning 340–573 (VEFNDVTFSY…GGHFAELARA (234 aa)) is the ABC transporter domain. Position 373-380 (373-380 (GPTGAGKS)) interacts with ATP.

Belongs to the ABC transporter superfamily. Beta-(1--&gt;2)glucan exporter (TC 3.A.1.108.1) family. In terms of assembly, homodimer.

It is found in the cell inner membrane. It carries out the reaction [(1-&gt;2)-beta-D-glucosyl](n)(in) + ATP + H2O = [(1-&gt;2)-beta-D-glucosyl](n)(out) + ADP + phosphate + H(+). Its function is as follows. Involved in beta-(1--&gt;2)glucan export. Transmembrane domains (TMD) form a pore in the inner membrane and the ATP-binding domain (NBD) is responsible for energy generation. In Bradyrhizobium diazoefficiens (strain JCM 10833 / BCRC 13528 / IAM 13628 / NBRC 14792 / USDA 110), this protein is Beta-(1--&gt;2)glucan export ATP-binding/permease protein NdvA.